An 82-amino-acid chain; its full sequence is MVTIRLARHGAKKRPFYQVVVTDSRNARNGRFIERVGFFNPIANGAEEETRLDLDRIAHWVGQGATVSDRVAALIKAANKAA.

The protein belongs to the bacterial ribosomal protein bS16 family.

This is Small ribosomal subunit protein bS16 from Klebsiella pneumoniae subsp. pneumoniae (strain ATCC 700721 / MGH 78578).